Here is a 232-residue protein sequence, read N- to C-terminus: MSLFEWVFGKNVTPQERLKKNQRALERTQRELEREKRKLELQDKKLVSEIKKSAKNGQVAAAKVQAKDLVRTRNYIQKFDNMKAQLQAISLRIQAVRSSDQMTRSMSEATGLLAGMNRTMNLPQLQRISMEFEKQSDLMGQRQEFMDEAIDNVMGDEVDEDEEADEIVNKVLDEIGVDLNSQLQSTPQNLVSNAPIAETAMGIPEPIGAGSEFHGNPDDDLQARLNTLKKQT.

A coiled-coil region spans residues 14-97; it reads PQERLKKNQR…AISLRIQAVR (84 aa). An interaction with VPS4 region spans residues 183–232; the sequence is LQSTPQNLVSNAPIAETAMGIPEPIGAGSEFHGNPDDDLQARLNTLKKQT. The interval 203 to 232 is disordered; that stretch reads IPEPIGAGSEFHGNPDDDLQARLNTLKKQT. An MIT-interacting motif motif is present at residues 219-229; sequence DDLQARLNTLK.

It belongs to the SNF7 family. In terms of assembly, core component of the ESCRT-III complex (endosomal sorting required for transport complex III). ESCRT-III appears to be sequentially assembled as a flat lattice on the endosome membrane and forms a transient 450 kDa complex that contains DID4, oligomerized SNF7, VPS20 and VPS24. SNF7 oligomerization into a membrane-associated filament is nucleated by association of SNF7 with VPS20; the process is terminated through association of VPS24, possibly by capping the SNF7 filament. VPS24 subsequently associates with DID4/VPS2.

It is found in the cytoplasm. The protein localises to the endosome membrane. Required for the sorting and concentration of proteins resulting in the entry of these proteins into the invaginating vesicles of the multivesicular body (MVB). Acts a component of the ESCRT-III complex, which appears to be critical for late steps in MVB sorting, such as membrane invagination and final cargo sorting and recruitment of late-acting components of the sorting machinery. The MVB pathway requires the sequential function of ESCRT-O, -I,-II and -III complex assemblies. Can directly stimulate VPS4 ATPase activity. The DID4/VPS2-VPS24 subcomplex is required for the VPS4-dependent dissociation of ESCRT-III. The protein is DOA4-independent degradation protein 4 (DID4) of Saccharomyces cerevisiae (strain ATCC 204508 / S288c) (Baker's yeast).